An 84-amino-acid polypeptide reads, in one-letter code: Cell division topological specificity factor (84 aa).

Belongs to the MinE family.

Its function is as follows. Prevents the cell division inhibition by proteins MinC and MinD at internal division sites while permitting inhibition at polar sites. This ensures cell division at the proper site by restricting the formation of a division septum at the midpoint of the long axis of the cell. The sequence is that of Cell division topological specificity factor from Pseudomonas fluorescens (strain ATCC BAA-477 / NRRL B-23932 / Pf-5).